A 144-amino-acid polypeptide reads, in one-letter code: Large ribosomal subunit protein uL15 (144 aa).

The disordered stretch occupies residues M1 to G52. The segment covering R21 to G31 has biased composition (gly residues).

This sequence belongs to the universal ribosomal protein uL15 family. In terms of assembly, part of the 50S ribosomal subunit.

In terms of biological role, binds to the 23S rRNA. This Actinobacillus pleuropneumoniae serotype 5b (strain L20) protein is Large ribosomal subunit protein uL15.